Here is a 171-residue protein sequence, read N- to C-terminus: Peptide deformylase 1 (171 aa).

Cys-99 and His-141 together coordinate Fe cation. Glu-142 is a catalytic residue.

It belongs to the polypeptide deformylase family. Fe(2+) serves as cofactor.

It carries out the reaction N-terminal N-formyl-L-methionyl-[peptide] + H2O = N-terminal L-methionyl-[peptide] + formate. In terms of biological role, removes the formyl group from the N-terminal Met of newly synthesized proteins. Requires at least a dipeptide for an efficient rate of reaction. N-terminal L-methionine is a prerequisite for activity but the enzyme has broad specificity at other positions. This chain is Peptide deformylase 1, found in Xanthomonas axonopodis pv. citri (strain 306).